The primary structure comprises 689 residues: DNA ligase (689 aa).

Residues 40 to 44 (DAEYD), 89 to 90 (SL), and glutamate 121 contribute to the NAD(+) site. Lysine 123 functions as the N6-AMP-lysine intermediate in the catalytic mechanism. NAD(+) is bound by residues arginine 144, glutamate 179, lysine 295, and lysine 319. Zn(2+) is bound by residues cysteine 413, cysteine 416, cysteine 431, and cysteine 437. The BRCT domain occupies 610–689 (REQSSLTGKI…AEWLTLVRDI (80 aa)).

The protein belongs to the NAD-dependent DNA ligase family. LigA subfamily. It depends on Mg(2+) as a cofactor. Mn(2+) serves as cofactor.

The catalysed reaction is NAD(+) + (deoxyribonucleotide)n-3'-hydroxyl + 5'-phospho-(deoxyribonucleotide)m = (deoxyribonucleotide)n+m + AMP + beta-nicotinamide D-nucleotide.. Functionally, DNA ligase that catalyzes the formation of phosphodiester linkages between 5'-phosphoryl and 3'-hydroxyl groups in double-stranded DNA using NAD as a coenzyme and as the energy source for the reaction. It is essential for DNA replication and repair of damaged DNA. The protein is DNA ligase of Rickettsia bellii (strain OSU 85-389).